The sequence spans 156 residues: Longistatin (156 aa).

Positions 1–21 (MTHRRLLWALCVAALLGVVAA) are cleaved as a signal peptide. EF-hand domains lie at 70–105 (SQDE…TNHH) and 123–156 (DIAS…TNQI). Ca(2+)-binding residues include Asp-83, Asp-85, Asn-87, Lys-89, Glu-94, Asp-135, Asn-137, Asp-139, Phe-141, and Glu-146.

As to quaternary structure, interacts with host fibrin. Interacts with human RAGE/AGER. Saliva (at protein level). Salivary gland (at protein level). Not detected in midgut, ovary, trachea, Malpighian tubule system, synganglion and cuticle.

Its subcellular location is the secreted. The protein localises to the cytoplasm. Resistant to inhibition by host SERPINE1. Inhibited by PMSF, aprotinin, antipain and leupeptin. Inhibited by Zn(2+). Functionally, anticoagulant and fibrinolytic protease that modulates blood feeding of ticks on vertebrate hosts. Degrades host fibrinogen and delays fibrin clot formation. Promotes lysis of fibrin clots in the host by activating host plasminogen in the presence of soluble fibrin. Binds Ca(2+). Hydrolyzes serine protease-specific substrates. Required for the formation of a blood pool, an accumulation of blood and tissue fluid developed at the tick's feeding site. Blocks activation of host AGER/RAGE. Reduces AGER/RAGE-dependent production of reactive oxygen species (ROS) in human endothelial cells. Prevents AGER/RAGE-dependent activation of NF-kappa-B and suppresses expression of adhesion molecules, such as VCAM1, ICAM1 and SELE, and secretion of cytokines, such as CSF3/GCSF and TGF-beta, in human endothelial cells. Suppresses RAGE/AGER-mediated migration of mouse peritoneal resident cells. Reduces AGER/RAGE-mediated inflammation in mice tissues. The polypeptide is Longistatin (Haemaphysalis longicornis (Bush tick)).